The following is a 104-amino-acid chain: A-type ATP synthase subunit F (104 aa).

It belongs to the V-ATPase F subunit family. As to quaternary structure, has multiple subunits with at least A(3), B(3), C, D, E, F, H, I and proteolipid K(x).

It is found in the cell membrane. Component of the A-type ATP synthase that produces ATP from ADP in the presence of a proton gradient across the membrane. This chain is A-type ATP synthase subunit F, found in Thermoplasma volcanium (strain ATCC 51530 / DSM 4299 / JCM 9571 / NBRC 15438 / GSS1).